The chain runs to 88 residues: Small ribosomal subunit protein uS17 (88 aa).

This sequence belongs to the universal ribosomal protein uS17 family. As to quaternary structure, part of the 30S ribosomal subunit.

Its function is as follows. One of the primary rRNA binding proteins, it binds specifically to the 5'-end of 16S ribosomal RNA. This Saccharophagus degradans (strain 2-40 / ATCC 43961 / DSM 17024) protein is Small ribosomal subunit protein uS17.